The chain runs to 171 residues: Squamosa promoter-binding protein 2 (171 aa).

2 disordered regions span residues 20-46 (GDEG…VVKV) and 57-76 (KLNL…TASG). Residues 22 to 40 (EGSDFEEEEEGEDEEEEEQ) are compositionally biased toward acidic residues. The SBP-type zinc-finger motif lies at 82-159 (QPCCLVENCG…AGHNERRRKS (78 aa)). Zn(2+)-binding residues include Cys85, Cys90, Cys107, His110, Cys126, Cys129, His133, and Cys145. A Bipartite nuclear localization signal motif is present at residues 142–158 (KRSCRRRLAGHNERRRK). A compositionally biased stretch (basic residues) spans 149–158 (LAGHNERRRK). A disordered region spans residues 149–171 (LAGHNERRRKSSLESHKEGRSPR). Residues 159–171 (SSLESHKEGRSPR) are compositionally biased toward basic and acidic residues.

The protein localises to the nucleus. Functionally, probable transcriptional factor. Binds to the promoter of the SQUAMOSA gene. This Antirrhinum majus (Garden snapdragon) protein is Squamosa promoter-binding protein 2 (SBP2).